The following is a 60-amino-acid chain: UPF0434 protein Pnap_1922 (60 aa).

The protein belongs to the UPF0434 family.

In Polaromonas naphthalenivorans (strain CJ2), this protein is UPF0434 protein Pnap_1922.